Consider the following 213-residue polypeptide: Dimethyl sulfoxide reductase transcriptional activator (213 aa).

In terms of domain architecture, HTH bat-type spans 155–206 (LTAKQREAALIAVHHGYYETPRRTELATLAEALGISKSALSQRLNAVEAKLA).

Involved in activating dmsEABCD gene expression related to dimethyl sulfoxide (DMSO) reductase. Required for anaerobic respiration on dimethyl sulfoxide (DMSO). This chain is Dimethyl sulfoxide reductase transcriptional activator, found in Haloferax volcanii (strain ATCC 29605 / DSM 3757 / JCM 8879 / NBRC 14742 / NCIMB 2012 / VKM B-1768 / DS2) (Halobacterium volcanii).